The primary structure comprises 360 residues: Uroporphyrinogen decarboxylase (360 aa).

Residues Arg-31 to Arg-35, Asp-81, Tyr-157, Thr-212, and His-333 each bind substrate.

Belongs to the uroporphyrinogen decarboxylase family. Homodimer.

Its subcellular location is the cytoplasm. It catalyses the reaction uroporphyrinogen III + 4 H(+) = coproporphyrinogen III + 4 CO2. It functions in the pathway porphyrin-containing compound metabolism; protoporphyrin-IX biosynthesis; coproporphyrinogen-III from 5-aminolevulinate: step 4/4. Its function is as follows. Catalyzes the decarboxylation of four acetate groups of uroporphyrinogen-III to yield coproporphyrinogen-III. The chain is Uroporphyrinogen decarboxylase from Janthinobacterium sp. (strain Marseille) (Minibacterium massiliensis).